A 301-amino-acid chain; its full sequence is MSVREKMLEILEGIDIRFQEPLHSYSYTKVGGEADYLVFPRNRFELARVVKFANQENIPWMVLGNASNIIVRDGGIRGFVILCDKLNNVSVDGYTIEAEAGANLIETTRIALRHSLTGFEFACGIPGSVGGAVFMNAGAYGGEIAHILQSCKVLTKDGEIETLSAKDLAFGYRHSAIQESGAVVLSVKFALAPGTHQVIKQEMDRLTHLRELKQPLEYPSCGSVFKRPVGHFAGQLISEAGLKGYRIGGVEVSEKHAGFMINVADGTAKDYEDLIQSVIEKVKEHSGITLEREVRILGESK.

The region spanning 30–194 (VGGEADYLVF…LSVKFALAPG (165 aa)) is the FAD-binding PCMH-type domain. Residue Arg-173 is part of the active site. Ser-223 functions as the Proton donor in the catalytic mechanism. Residue Glu-293 is part of the active site.

It belongs to the MurB family. It depends on FAD as a cofactor.

It localises to the cytoplasm. The enzyme catalyses UDP-N-acetyl-alpha-D-muramate + NADP(+) = UDP-N-acetyl-3-O-(1-carboxyvinyl)-alpha-D-glucosamine + NADPH + H(+). Its pathway is cell wall biogenesis; peptidoglycan biosynthesis. Functionally, cell wall formation. This chain is UDP-N-acetylenolpyruvoylglucosamine reductase, found in Streptococcus pneumoniae (strain 70585).